The primary structure comprises 211 residues: MGILDPYKGFGVTFSTMFKKPTTEQYPEQKKETAPRFHGRHQLNRHPDGLEKCVGCELCAWACPADAIYVEGADNTDEQRFSPGERYGRVYQINYLRCILCGLCIEACPTRALTMSNDYELADDSRDDLIFTKEQLLAPLRAGMESPPHPMRLGESETDYYTRDPDAPLPWQVGGSPADEADEAGEAGEAGEAERAADKVPAHGAGSERPR.

The disordered stretch occupies residues Pro21–His41. 2 4Fe-4S ferredoxin-type domains span residues Leu43 to Ala73 and Arg89 to Asp118. [4Fe-4S] cluster contacts are provided by Cys53, Cys56, Cys59, Cys63, Cys98, Cys101, Cys104, and Cys108. The segment at Arg141–Arg211 is disordered. The span at Arg152–Asp166 shows a compositional bias: basic and acidic residues. The span at Asp179–Gly191 shows a compositional bias: acidic residues. Positions Glu192–Arg211 are enriched in basic and acidic residues.

This sequence belongs to the complex I 23 kDa subunit family. As to quaternary structure, NDH-1 is composed of 14 different subunits. Subunits NuoA, H, J, K, L, M, N constitute the membrane sector of the complex. [4Fe-4S] cluster serves as cofactor.

It localises to the cell membrane. It carries out the reaction a quinone + NADH + 5 H(+)(in) = a quinol + NAD(+) + 4 H(+)(out). Its function is as follows. NDH-1 shuttles electrons from NADH, via FMN and iron-sulfur (Fe-S) centers, to quinones in the respiratory chain. The immediate electron acceptor for the enzyme in this species is believed to be ubiquinone. Couples the redox reaction to proton translocation (for every two electrons transferred, four hydrogen ions are translocated across the cytoplasmic membrane), and thus conserves the redox energy in a proton gradient. This chain is NADH-quinone oxidoreductase subunit I, found in Parafrankia sp. (strain EAN1pec).